The following is a 132-amino-acid chain: Glycerol-3-phosphate cytidylyltransferase (132 aa).

CTP-binding positions include 9 to 10 and 14 to 17; these read TY and HYGH. Lys44 lines the substrate pocket. A CTP-binding site is contributed by Lys46. Residue Lys77 coordinates substrate. 113 to 120 serves as a coordination point for CTP; the sequence is RTEGISTT.

The protein belongs to the cytidylyltransferase family. As to quaternary structure, homotetramer or homodimer.

The protein localises to the cytoplasm. It carries out the reaction sn-glycerol 3-phosphate + CTP + H(+) = CDP-glycerol + diphosphate. Its pathway is cell wall biogenesis; poly(ribitol phosphate) teichoic acid biosynthesis. Catalyzes the transfer of the cytidylyl group of CTP to sn-glycerol 3-phosphate so the activated glycerol 3-phosphate can be used for teichoic acid synthesis, via incorporation into both the linkage unit by TarB and TarF. This is Glycerol-3-phosphate cytidylyltransferase from Staphylococcus aureus (strain NCTC 8325 / PS 47).